Consider the following 550-residue polypeptide: Zinc finger protein 382 (550 aa).

Positions Met-1–Asn-105 are mediates interaction with TRIM28. 2 represses transcription regions span residues Gly-5–Val-46 and Ile-70–Pro-211. One can recognise a KRAB domain in the interval Val-7 to Glu-78. The C2H2-type 1; degenerate zinc finger occupies Phe-212–His-234. C2H2-type zinc fingers lie at residues Phe-296 to His-318, Tyr-324 to His-346, Phe-352 to His-374, Tyr-380 to His-402, Tyr-408 to His-430, Tyr-436 to His-458, Tyr-464 to His-486, Asn-492 to His-514, and Tyr-520 to His-542. The segment at Phe-296–Gln-550 is required for transcriptional repression activity; probably mediates sequence-specific DNA-binding.

The protein belongs to the krueppel C2H2-type zinc-finger protein family. In terms of assembly, interacts with TRIM28; enhances the transcriptional repressor activity. As to expression, specifically expressed in heart with a weaker expression also detected in skeletal muscle.

It localises to the nucleus. In terms of biological role, functions as a sequence-specific transcriptional repressor. This Homo sapiens (Human) protein is Zinc finger protein 382 (ZNF382).